The primary structure comprises 443 residues: D-lactate dehydrogenase (443 aa).

Residues 1–182 (MSWIDELSKI…GGKTIKNSSG (182 aa)) lie on the Extracellular side of the membrane. An FAD-binding PCMH-type domain is found at 32–209 (RAAENFVVVK…TKATIRLFPQ (178 aa)). The helical transmembrane segment at 183–203 (YSLLHLLVGSEGTLAVITKAT) threads the bilayer. Topologically, residues 204 to 383 (IRLFPQMRDM…WEKSYFEFRK (180 aa)) are cytoplasmic. A helical transmembrane segment spans residues 384-404 (SLLSLAVSLGGVISGEHGIGA). Over 405–443 (VKLSELEELFPEQFELMRQIKLLFDPKNILNPGKVVRKL) the chain is Extracellular.

It belongs to the FAD-binding oxidoreductase/transferase type 4 family. Requires FAD as cofactor. Zn(2+) serves as cofactor.

It is found in the cell membrane. It catalyses the reaction (R)-lactate + A = pyruvate + AH2. In terms of biological role, catalyzes the dehydrogenation of (R)-lactate (D-lactate) to pyruvate. Is likely involved in the utilization of D-lactate as a sole source for both carbon and electrons for dissimilatory sulfate reduction. Cannot use L-lactate as substrate, and NAD(+), horse cytochrome c, methylene blue or dimethylnaphthoquinone as acceptors. Active in vitro with artificial electron acceptors such as 2,6-dichlorophenolindophenol (DCPIP); the physiological acceptor is not known, but potential acceptors include cytochromes or quinones. The protein is D-lactate dehydrogenase of Archaeoglobus fulgidus (strain ATCC 49558 / DSM 4304 / JCM 9628 / NBRC 100126 / VC-16).